The chain runs to 136 residues: Large ribosomal subunit protein uL16 (136 aa).

It belongs to the universal ribosomal protein uL16 family. As to quaternary structure, part of the 50S ribosomal subunit.

Binds 23S rRNA and is also seen to make contacts with the A and possibly P site tRNAs. The chain is Large ribosomal subunit protein uL16 from Shewanella woodyi (strain ATCC 51908 / MS32).